The chain runs to 210 residues: Glutathione S-transferase 3 (210 aa).

One can recognise a GST N-terminal domain in the interval 1 to 80; the sequence is MDFYYLPLSA…YLVEKYGKQN (80 aa). Glutathione is bound by residues Ser-9, 50–52, and 64–66; these read HTI and ESR. The 122-residue stretch at 87–208 folds into the GST C-terminal domain; sequence CPKKRALINQ…AGCLEMKKYF (122 aa).

It belongs to the GST superfamily. Theta family. In terms of assembly, homodimer.

It catalyses the reaction RX + glutathione = an S-substituted glutathione + a halide anion + H(+). Conjugation of reduced glutathione to a wide number of exogenous and endogenous hydrophobic electrophiles. This chain is Glutathione S-transferase 3 (Gst3), found in Musca domestica (House fly).